A 248-amino-acid chain; its full sequence is Ribosomal RNA small subunit methyltransferase A (248 aa).

6 residues coordinate S-adenosyl-L-methionine: histidine 11, leucine 13, glycine 38, glutamate 60, aspartate 83, and asparagine 101.

Belongs to the class I-like SAM-binding methyltransferase superfamily. rRNA adenine N(6)-methyltransferase family. RsmA subfamily.

Its subcellular location is the cytoplasm. It carries out the reaction adenosine(1518)/adenosine(1519) in 16S rRNA + 4 S-adenosyl-L-methionine = N(6)-dimethyladenosine(1518)/N(6)-dimethyladenosine(1519) in 16S rRNA + 4 S-adenosyl-L-homocysteine + 4 H(+). Specifically dimethylates two adjacent adenosines (A1518 and A1519) in the loop of a conserved hairpin near the 3'-end of 16S rRNA in the 30S particle. May play a critical role in biogenesis of 30S subunits. This is Ribosomal RNA small subunit methyltransferase A from Aquifex aeolicus (strain VF5).